The following is a 198-amino-acid chain: Na(+)-translocating NADH-quinone reductase subunit E (198 aa).

Helical transmembrane passes span 11 to 31, 35 to 55, 77 to 97, 109 to 129, 140 to 160, and 176 to 196; these read AVFI…FLAV, VTTA…SVPA, FLNF…LEMI, LGIF…VSFM, IVYG…LASI, and LGIT…FSGV.

It belongs to the NqrDE/RnfAE family. In terms of assembly, composed of six subunits; NqrA, NqrB, NqrC, NqrD, NqrE and NqrF.

It is found in the cell inner membrane. It carries out the reaction a ubiquinone + n Na(+)(in) + NADH + H(+) = a ubiquinol + n Na(+)(out) + NAD(+). In terms of biological role, NQR complex catalyzes the reduction of ubiquinone-1 to ubiquinol by two successive reactions, coupled with the transport of Na(+) ions from the cytoplasm to the periplasm. NqrA to NqrE are probably involved in the second step, the conversion of ubisemiquinone to ubiquinol. This Photorhabdus laumondii subsp. laumondii (strain DSM 15139 / CIP 105565 / TT01) (Photorhabdus luminescens subsp. laumondii) protein is Na(+)-translocating NADH-quinone reductase subunit E.